The chain runs to 288 residues: Type II iodothyronine deiodinase (288 aa).

The Lumenal segment spans residues 1–5 (MPHVN). A helical; Signal-anchor for type III membrane protein membrane pass occupies residues 6–26 (LLVVLLILPGVFSNCLFLALY). The Cytoplasmic portion of the chain corresponds to 27 to 288 (DAVSFLRRAL…SFLESVKASR (262 aa)). The disordered stretch occupies residues 99 to 130 (SCAASSSSSHETPTPRTTAEAAATVTTSTTTT). Sec160 is an active-site residue. A non-standard amino acid (selenocysteine) is located at residue Sec160.

The protein belongs to the iodothyronine deiodinase family. Predominantly monomer. Can form homodimers but homodimerization is not essential for enzyme activity. In terms of tissue distribution, expressed in intestine, liver, kidney and brain of immediately premetamorphic larvae, of larvae in all stages of metamorphosis and of parasitic feeding juveniles. In immediately premetamorphic larvae, levels are significantly higher in intestine and liver than in kidney and brain.

The protein localises to the endoplasmic reticulum membrane. It catalyses the reaction 3,3',5-triiodo-L-thyronine + iodide + A + H(+) = L-thyroxine + AH2. It carries out the reaction 3,3'-diiodo-L-thyronine + iodide + A + H(+) = 3,3',5'-triiodo-L-thyronine + AH2. The enzyme catalyses 3'-iodo-L-thyronine + iodide + A + H(+) = 3',5'-diiodo-L-thyronine + AH2. The catalysed reaction is 3,3'-diiodothyronamine + iodide + A + H(+) = 3,3',5'-triiodothyronamine + AH2. It catalyses the reaction 3'-iodothyronamine + iodide + A + H(+) = 3',5'-diiodothyronamine + AH2. Plays a crucial role in the metabolism of thyroid hormones (TH) and has specific roles in TH activation and inactivation by deiodination. Catalyzes the deiodination of L-thyroxine (T4) to 3,5,3'-triiodothyronine (T3), 3,3',5'-triiodothyronine (rT3) to 3,3'-diiodothyronine (3,3'-T2) and 3',5'-diiodothyronine (3',5'-T2) to 3'-monoiodothyronine (3'-T1) via outer-ring deiodination (ORD). Catalyzes the phenolic ring deiodinations of 3,3',5'-triiodothyronamine and 3',5'- diiodothyronamine. This Petromyzon marinus (Sea lamprey) protein is Type II iodothyronine deiodinase.